The primary structure comprises 216 residues: UPF0193 protein EVG1 homolog (216 aa).

This sequence belongs to the UPF0193 (EVG1) family.

The protein is UPF0193 protein EVG1 homolog of Mus musculus (Mouse).